We begin with the raw amino-acid sequence, 233 residues long: tRNA (guanine-N(1)-)-methyltransferase (233 aa).

S-adenosyl-L-methionine is bound by residues glycine 121 and 140-145 (IGDYIL).

The protein belongs to the RNA methyltransferase TrmD family. As to quaternary structure, homodimer.

Its subcellular location is the cytoplasm. It carries out the reaction guanosine(37) in tRNA + S-adenosyl-L-methionine = N(1)-methylguanosine(37) in tRNA + S-adenosyl-L-homocysteine + H(+). Its function is as follows. Specifically methylates guanosine-37 in various tRNAs. The chain is tRNA (guanine-N(1)-)-methyltransferase from Endomicrobium trichonymphae.